Reading from the N-terminus, the 158-residue chain is uncharacterized protein (158 aa).

Disordered regions lie at residues 1 to 86 and 138 to 158; these read MDFR…DHWW and ASQV…LLGF. Positions 7–76 are enriched in low complexity; that stretch reads SPTTCTTPAS…PTPASSGSAA (70 aa).

This is an uncharacterized protein from Homo sapiens (Human).